The sequence spans 522 residues: Ribose import ATP-binding protein RbsA 1 (522 aa).

2 ABC transporter domains span residues L8 to I243 and R249 to N496. G40 to S47 serves as a coordination point for ATP. Residues A492–H522 form a disordered region. The segment covering K499 to H522 has biased composition (basic and acidic residues).

It belongs to the ABC transporter superfamily. Ribose importer (TC 3.A.1.2.1) family. In terms of assembly, the complex is composed of an ATP-binding protein (RbsA), two transmembrane proteins (RbsC) and a solute-binding protein (RbsB).

It is found in the cell membrane. It carries out the reaction D-ribose(out) + ATP + H2O = D-ribose(in) + ADP + phosphate + H(+). Part of the ABC transporter complex RbsABC involved in ribose import. Responsible for energy coupling to the transport system. The chain is Ribose import ATP-binding protein RbsA 1 from Streptomyces avermitilis (strain ATCC 31267 / DSM 46492 / JCM 5070 / NBRC 14893 / NCIMB 12804 / NRRL 8165 / MA-4680).